The sequence spans 686 residues: Putative pentatricopeptide repeat-containing protein At3g49142 (686 aa).

12 PPR repeats span residues 73 to 103 (NSSL…IPER), 104 to 138 (NVII…NVRP), 139 to 173 (DHYT…GLSS), 174 to 204 (TLFV…MSRR), 205 to 239 (DVVS…KISH), 240 to 272 (DAGT…MGKK), 273 to 307 (SLVS…GFEP), 308 to 342 (DAVS…KLIP), 343 to 373 (NLLL…MKSR), 374 to 408 (DVVS…GLVP), 409 to 439 (DSIA…MTDH), and 445 to 475 (RLEH…MSME). The segment at 480–555 (VWGALLGACR…NPGASNVEVN (76 aa)) is type E motif. Positions 556-586 (RIIHTFLVGDRSHPQSDEIYRELDVLVKKMK) are type E(+) motif. Residues 587 to 686 (ELGYVPDSES…FGVCSCGDYW (100 aa)) form a type DYW motif region.

It belongs to the PPR family. PCMP-H subfamily.

This chain is Putative pentatricopeptide repeat-containing protein At3g49142 (PCMP-H77), found in Arabidopsis thaliana (Mouse-ear cress).